Here is a 105-residue protein sequence, read N- to C-terminus: U-scoloptoxin(05)-Ssd1a (105 aa).

Positions 1–24 (MKEAVKMSCLCIFVFLFLFSLTDA) are cleaved as a signal peptide. The interval 79-105 (HVPESNQKDGKVSTHMSSCNTDGCNAN) is disordered. The span at 92–105 (THMSSCNTDGCNAN) shows a compositional bias: polar residues.

This sequence belongs to the scoloptoxin-05 family. Post-translationally, contains 4 disulfide bonds. Expressed by the venom gland.

The protein localises to the secreted. The protein is U-scoloptoxin(05)-Ssd1a of Scolopendra dehaani (Thai centipede).